The chain runs to 1390 residues: DNA-directed RNA polymerase III subunit RPC1 (1390 aa).

Residues cysteine 69, cysteine 72, cysteine 79, histidine 82, cysteine 109, and cysteine 112 each contribute to the Zn(2+) site. Lysine 144 is a DNA binding site. 2 residues coordinate Zn(2+): cysteine 156 and cysteine 159. The DNA site is built by lysine 167, serine 326, lysine 348, arginine 353, arginine 360, and arginine 366. An N6-acetyllysine modification is found at lysine 445. Arginine 464 is a binding site for RNA. Mg(2+) contacts are provided by aspartate 499, aspartate 501, and aspartate 503. Aspartate 503 contacts RNA. Residues 844 to 856 (PTEFFFHTMAGRE) are bridging helix. Residues arginine 1159, arginine 1305, and lysine 1323 each coordinate DNA.

It belongs to the RNA polymerase beta' chain family. In terms of assembly, component of the RNA polymerase III (Pol III) complex consisting of 17 subunits: a ten-subunit catalytic core composed of POLR3A/RPC1, POLR3B/RPC2, POLR1C/RPAC1, POLR1D/RPAC2, POLR3K/RPC10, POLR2E/RPABC1, POLR2F/RPABC2, POLR2H/RPABC3, POLR2K/RPABC4 and POLR2L/RPABC5; a mobile stalk composed of two subunits POLR3H/RPC8 and CRCP/RPC9, protruding from the core and functioning primarily in transcription initiation; and additional subunits homologous to general transcription factors of the RNA polymerase II machinery, POLR3C/RPC3-POLR3F/RPC6-POLR3G/RPC7 heterotrimer required for transcription initiation and POLR3D/RPC4-POLR3E/RPC5 heterodimer involved in both transcription initiation and termination. As part of the RNA polymerase III complex, interacts with PKP2. Mg(2+) serves as cofactor.

It localises to the nucleus. It is found in the cytoplasm. The protein localises to the cytosol. It carries out the reaction RNA(n) + a ribonucleoside 5'-triphosphate = RNA(n+1) + diphosphate. In terms of biological role, catalytic core component of RNA polymerase III (Pol III), a DNA-dependent RNA polymerase which synthesizes small non-coding RNAs using the four ribonucleoside triphosphates as substrates. Synthesizes 5S rRNA, snRNAs, tRNAs and miRNAs from at least 500 distinct genomic loci. Pol III-mediated transcription cycle proceeds through transcription initiation, transcription elongation and transcription termination stages. During transcription initiation, Pol III is recruited to DNA promoters type I, II or III with the help of general transcription factors and other specific initiation factors. Once the polymerase has escaped from the promoter it enters the elongation phase during which RNA is actively polymerized, based on complementarity with the template DNA strand. Transcription termination involves the release of the RNA transcript and polymerase from the DNA. Forms Pol III active center together with the second largest subunit POLR3B/RPC2. Appends one nucleotide at a time to the 3' end of the nascent RNA, with POLR3A/RPC1 contributing a Mg(2+)-coordinating DxDGD motif, and POLR3B/RPC2 participating in the coordination of a second Mg(2+) ion and providing lysine residues believed to facilitate Watson-Crick base pairing between the incoming nucleotide and template base. Typically, Mg(2+) ions direct a 5' nucleoside triphosphate to form a phosphodiester bond with the 3' hydroxyl of the preceding nucleotide of the nascent RNA, with the elimination of pyrophosphate. Pol III plays a key role in sensing and limiting infection by intracellular bacteria and DNA viruses. Acts as a nuclear and cytosolic DNA sensor involved in innate immune response. Can sense non-self dsDNA that serves as template for transcription into dsRNA. The non-self RNA polymerase III transcripts, such as Epstein-Barr virus-encoded RNAs (EBERs) induce type I interferon and NF-kappa-B through the RIG-I pathway. The chain is DNA-directed RNA polymerase III subunit RPC1 from Bos taurus (Bovine).